The following is a 302-amino-acid chain: Ectoine dioxygenase (302 aa).

Position 128 (Q128) interacts with L-ectoine. Residue K134 coordinates 2-oxoglutarate. Residues H145, D147, and H246 each coordinate Fe cation.

The protein belongs to the PhyH family. EctD subfamily. In terms of assembly, homodimer. Fe(2+) is required as a cofactor.

The catalysed reaction is L-ectoine + 2-oxoglutarate + O2 = 5-hydroxyectoine + succinate + CO2. Its function is as follows. Involved in the biosynthesis of 5-hydroxyectoine, called compatible solute, which helps organisms to survive extreme osmotic stress by acting as a highly soluble organic osmolyte. Catalyzes the 2-oxoglutarate-dependent selective hydroxylation of L-ectoine to yield (4S,5S)-5-hydroxyectoine. The chain is Ectoine dioxygenase from Stutzerimonas stutzeri (strain A1501) (Pseudomonas stutzeri).